We begin with the raw amino-acid sequence, 1911 residues long: Protein TIC 214 (1911 aa).

6 consecutive transmembrane segments (helical) span residues 41-61, 81-103, 108-128, 147-167, 195-215, and 238-258; these read IINS…FSIG, ISAT…YAPL, GKPH…FFWN, FNIQ…HFIL, IGWL…LFWI, and IFSI…PLPI. 3 disordered regions span residues 265-299, 798-817, and 1599-1647; these read ETSE…STEE, DSEE…KEEN, and NQNQ…RKKK. Over residues 268-297 the composition is skewed to acidic residues; the sequence is ETEESEENEEESDIEITSEPKEQDEEEGST. 2 stretches are compositionally biased toward basic and acidic residues: residues 1603 to 1615 and 1623 to 1635; these read QEKK…RDLG and QKQK…EKNY.

It belongs to the TIC214 family. As to quaternary structure, part of the Tic complex.

The protein localises to the plastid. The protein resides in the chloroplast inner membrane. In terms of biological role, involved in protein precursor import into chloroplasts. May be part of an intermediate translocation complex acting as a protein-conducting channel at the inner envelope. This chain is Protein TIC 214, found in Lemna minor (Common duckweed).